Consider the following 432-residue polypeptide: Adenylosuccinate synthetase (432 aa).

GTP is bound by residues 13–19 and 41–43; these read GDEGKGK and GHT. The active-site Proton acceptor is the Asp-14. Positions 14 and 41 each coordinate Mg(2+). IMP-binding positions include 14-17, 39-42, Thr-130, Arg-144, Gln-225, Thr-240, and Arg-304; these read DEGK and NAGH. The Proton donor role is filled by His-42. Residue 300 to 306 participates in substrate binding; that stretch reads AVTGRPR. Residues Arg-306, 332 to 334, and 415 to 417 each bind GTP; these read KLD and STG.

Belongs to the adenylosuccinate synthetase family. Homodimer. Requires Mg(2+) as cofactor.

It localises to the cytoplasm. The catalysed reaction is IMP + L-aspartate + GTP = N(6)-(1,2-dicarboxyethyl)-AMP + GDP + phosphate + 2 H(+). It functions in the pathway purine metabolism; AMP biosynthesis via de novo pathway; AMP from IMP: step 1/2. Its function is as follows. Plays an important role in the de novo pathway of purine nucleotide biosynthesis. Catalyzes the first committed step in the biosynthesis of AMP from IMP. This chain is Adenylosuccinate synthetase, found in Actinobacillus succinogenes (strain ATCC 55618 / DSM 22257 / CCUG 43843 / 130Z).